The primary structure comprises 221 residues: Riboflavin kinase (221 aa).

Positions 1–92 (MVTPEDLECL…YRLFGRQEKS (92 aa)) are H-T-H motif-like. The tract at residues 93–221 (LMLNGTVQSG…GDEVTIEVTL (129 aa)) is riboflavin kinase. 102-107 (GLGEGA) provides a ligand contact to CDP. Mg(2+) is bound by residues threonine 131 and asparagine 133. FMN is bound by residues threonine 188 and glutamate 196. 201 to 204 (EGLR) is a CDP binding site.

This sequence belongs to the archaeal riboflavin kinase family. Requires Mg(2+) as cofactor.

It catalyses the reaction riboflavin + CTP = CDP + FMN + H(+). Its pathway is cofactor biosynthesis; FMN biosynthesis; FMN from riboflavin (CTP route): step 1/1. In terms of biological role, catalyzes the CTP-dependent phosphorylation of riboflavin (vitamin B2) to form flavin mononucleotide (FMN). This is Riboflavin kinase (ribK) from Methanospirillum hungatei JF-1 (strain ATCC 27890 / DSM 864 / NBRC 100397 / JF-1).